The chain runs to 177 residues: ATP synthase subunit delta (177 aa).

Belongs to the ATPase delta chain family. In terms of assembly, F-type ATPases have 2 components, F(1) - the catalytic core - and F(0) - the membrane proton channel. F(1) has five subunits: alpha(3), beta(3), gamma(1), delta(1), epsilon(1). F(0) has three main subunits: a(1), b(2) and c(10-14). The alpha and beta chains form an alternating ring which encloses part of the gamma chain. F(1) is attached to F(0) by a central stalk formed by the gamma and epsilon chains, while a peripheral stalk is formed by the delta and b chains.

The protein resides in the cell inner membrane. Its function is as follows. F(1)F(0) ATP synthase produces ATP from ADP in the presence of a proton or sodium gradient. F-type ATPases consist of two structural domains, F(1) containing the extramembraneous catalytic core and F(0) containing the membrane proton channel, linked together by a central stalk and a peripheral stalk. During catalysis, ATP synthesis in the catalytic domain of F(1) is coupled via a rotary mechanism of the central stalk subunits to proton translocation. This protein is part of the stalk that links CF(0) to CF(1). It either transmits conformational changes from CF(0) to CF(1) or is implicated in proton conduction. This chain is ATP synthase subunit delta, found in Shewanella woodyi (strain ATCC 51908 / MS32).